A 597-amino-acid chain; its full sequence is MTDSSPSQHLFADVLARVHRACAALAEEGALPSGLDLARIVVEPPRDASHGDMATNAAMVLAKDAKAKPRDLAERIVTKLRADDLIESADIAGPGFINLTLKLPVWADVLRDVLRDGEGYGRSAIGAGEKVNVEYVSANPTGPMHVGHCRGAVFGDALASLLSFAGYDVTREYYINDAGSQVDVLARSAFLRYREALGEDIGEIPDGLYPGDYLKPVGQALAAGHGDSLVKAPEAEWLGLVRAKAIGMMMEMIRGDLAALNIRHDVFFSERSLIDGSADRVAETIGFLREKGDVYEGRLPPPKGAPVEDYEDREQTLFRATAYGDDVDRPLKKSDGGYTYFASDIAYHKTKFDRGFHNMVDVWGADHGGYIKRVQAAIKAVTSGKGTLDVKIVQLVKLLRNGEPVKMSKRAGDFVTLREVVEEVGSDAVRFMMLFRKNDAVLDFDLARVIEQSKDNPVFYVQYGHARGFSIFRNAREVFPDLPEADAERRQFLGTADLERLSDPAELGLLRKLALYPRTVEAAAAAHEPHRIAFYLYDLASEFHALWTKGRDLPHLRFIINNDAQITRARLALVQGVVAVLASGLTVLGVHAPTEMR.

The 'HIGH' region motif lies at 138-148 (ANPTGPMHVGH).

This sequence belongs to the class-I aminoacyl-tRNA synthetase family. Monomer.

Its subcellular location is the cytoplasm. The enzyme catalyses tRNA(Arg) + L-arginine + ATP = L-arginyl-tRNA(Arg) + AMP + diphosphate. The chain is Arginine--tRNA ligase from Nitrobacter winogradskyi (strain ATCC 25391 / DSM 10237 / CIP 104748 / NCIMB 11846 / Nb-255).